The following is a 198-amino-acid chain: Probable molybdenum cofactor guanylyltransferase (198 aa).

GTP-binding positions include 11-13 (LAG), lysine 23, aspartate 71, and aspartate 102. Aspartate 102 contacts Mg(2+).

This sequence belongs to the MobA family. Mg(2+) is required as a cofactor.

Its subcellular location is the cytoplasm. The enzyme catalyses Mo-molybdopterin + GTP + H(+) = Mo-molybdopterin guanine dinucleotide + diphosphate. In terms of biological role, transfers a GMP moiety from GTP to Mo-molybdopterin (Mo-MPT) cofactor (Moco or molybdenum cofactor) to form Mo-molybdopterin guanine dinucleotide (Mo-MGD) cofactor. The chain is Probable molybdenum cofactor guanylyltransferase from Halalkalibacterium halodurans (strain ATCC BAA-125 / DSM 18197 / FERM 7344 / JCM 9153 / C-125) (Bacillus halodurans).